The sequence spans 320 residues: Aspartate carbamoyltransferase catalytic subunit (320 aa).

Carbamoyl phosphate-binding residues include Arg-53 and Thr-54. Lys-82 is an L-aspartate binding site. Arg-103, His-131, and Gln-134 together coordinate carbamoyl phosphate. Arg-164 and Arg-227 together coordinate L-aspartate. Carbamoyl phosphate contacts are provided by Leu-266 and Pro-267.

The protein belongs to the aspartate/ornithine carbamoyltransferase superfamily. ATCase family. As to quaternary structure, heterododecamer (2C3:3R2) of six catalytic PyrB chains organized as two trimers (C3), and six regulatory PyrI chains organized as three dimers (R2).

The catalysed reaction is carbamoyl phosphate + L-aspartate = N-carbamoyl-L-aspartate + phosphate + H(+). It functions in the pathway pyrimidine metabolism; UMP biosynthesis via de novo pathway; (S)-dihydroorotate from bicarbonate: step 2/3. Catalyzes the condensation of carbamoyl phosphate and aspartate to form carbamoyl aspartate and inorganic phosphate, the committed step in the de novo pyrimidine nucleotide biosynthesis pathway. This chain is Aspartate carbamoyltransferase catalytic subunit, found in Bifidobacterium adolescentis (strain ATCC 15703 / DSM 20083 / NCTC 11814 / E194a).